Reading from the N-terminus, the 226-residue chain is MDLEALKKEAALRSVALVQSGQRVGLGTGSTAKYAIEELGRKLAAGELSGIVGVSTSEASEKLAREVGIPTEPLDPRPLDIAIDGADEIAPNLDLVKGLGGALVREKMTEVQAKRLIIIADHTKLVTRLGEKAPLPIEIVPFGFLSTIERLREFLPGGRLRQPGAQPYVTDNGNYIFDAQLPAEFDARELERRIKGTLGVVDTGLFLGMAERAFVAAPDGVQELTR.

Residues 28-31 (TGST), 84-87 (DGAD), and 97-100 (KGLG) each bind substrate. Catalysis depends on Glu106, which acts as the Proton acceptor. Lys124 is a binding site for substrate.

Belongs to the ribose 5-phosphate isomerase family. Homodimer.

The enzyme catalyses aldehydo-D-ribose 5-phosphate = D-ribulose 5-phosphate. It functions in the pathway carbohydrate degradation; pentose phosphate pathway; D-ribose 5-phosphate from D-ribulose 5-phosphate (non-oxidative stage): step 1/1. In terms of biological role, catalyzes the reversible conversion of ribose-5-phosphate to ribulose 5-phosphate. This is Ribose-5-phosphate isomerase A from Deinococcus radiodurans (strain ATCC 13939 / DSM 20539 / JCM 16871 / CCUG 27074 / LMG 4051 / NBRC 15346 / NCIMB 9279 / VKM B-1422 / R1).